Consider the following 402-residue polypeptide: Acetate kinase (402 aa).

Asn13 contributes to the Mg(2+) binding site. Lys20 is an ATP binding site. Substrate is bound at residue Arg94. Catalysis depends on Asp151, which acts as the Proton donor/acceptor. Residues 211–215 (HLGNG), 285–287 (DFR), and 333–337 (GVGEN) contribute to the ATP site. Residue Glu387 participates in Mg(2+) binding.

The protein belongs to the acetokinase family. In terms of assembly, homodimer. The cofactor is Mg(2+). Mn(2+) serves as cofactor.

The protein resides in the cytoplasm. It carries out the reaction acetate + ATP = acetyl phosphate + ADP. The protein operates within metabolic intermediate biosynthesis; acetyl-CoA biosynthesis; acetyl-CoA from acetate: step 1/2. Functionally, catalyzes the formation of acetyl phosphate from acetate and ATP. Can also catalyze the reverse reaction. This chain is Acetate kinase, found in Nocardia farcinica (strain IFM 10152).